Here is a 537-residue protein sequence, read N- to C-terminus: Probable E3 ubiquitin-protein ligase ARI3 (537 aa).

The interval M1–E30 is disordered. The tract at residues K117–K331 is TRIAD supradomain. The Zn(2+) site is built by C121, C124, C139, H141, C144, C147, C166, C171, C210, C216, C234, C236, C241, C244, H249, C254, C281, and C284. Residues C121–C171 form an RING-type 1 zinc finger. The segment at D190–C254 adopts an IBR-type zinc-finger fold. The RING-type 2; atypical zinc-finger motif lies at C281 to C309. C294 is an active-site residue. Zn(2+) is bound by residues C299, C301, C306, C309, H317, and C327.

The protein belongs to the RBR family. Ariadne subfamily. Requires Zn(2+) as cofactor. In terms of tissue distribution, ubiquitous.

The enzyme catalyses [E2 ubiquitin-conjugating enzyme]-S-ubiquitinyl-L-cysteine + [acceptor protein]-L-lysine = [E2 ubiquitin-conjugating enzyme]-L-cysteine + [acceptor protein]-N(6)-ubiquitinyl-L-lysine.. The protein operates within protein modification; protein ubiquitination. Might act as an E3 ubiquitin-protein ligase, or as part of E3 complex, which accepts ubiquitin from specific E2 ubiquitin-conjugating enzymes and then transfers it to substrates. The polypeptide is Probable E3 ubiquitin-protein ligase ARI3 (ARI3) (Arabidopsis thaliana (Mouse-ear cress)).